The sequence spans 68 residues: Large ribosomal subunit protein uL29 (68 aa).

This sequence belongs to the universal ribosomal protein uL29 family.

This Chloroflexus aggregans (strain MD-66 / DSM 9485) protein is Large ribosomal subunit protein uL29.